Here is a 226-residue protein sequence, read N- to C-terminus: METKKCSKCTEIKPIDKFYKIKNGTKIRSFCKKCDNIMSQSYKNRNKNMISSYNKKYKSKHKKQISDYNKNYNIINREKIQKRQTEQHKVRRKNDPNYKMSITLRNRIYKLLNGSNNKTTKELIGCDYNFFLKWLEFQFDDVMTFDNHGEIWHVDHVSQCNTFDLLDEEQQKLCFHWSNMRPLEKSINLGRPDERDYDDIKKHNKIVRAFLKQIKKNKEKYNFTLL.

Belongs to the mimivirus L246/L426 family.

This is an uncharacterized protein from Acanthamoeba polyphaga mimivirus (APMV).